Consider the following 393-residue polypeptide: Envelope glycoprotein D (393 aa).

The N-terminal stretch at 1-25 is a signal peptide; the sequence is MGGAAARLGAVILFVVIVGLHGVRG. The segment at 25-57 is interaction with TNFRSF14; sequence GKYALADASLKMADPNRFRGKDLPVLDQLTDPP. Topologically, residues 26–338 are virion surface; the sequence is KYALADASLK…PYHPPATPNN (313 aa). His-64 serves as a coordination point for Zn(2+). 3 cysteine pairs are disulfide-bonded: Cys-90–Cys-213, Cys-130–Cys-226, and Cys-142–Cys-151. Asn-118 and Asn-145 each carry an N-linked (GlcNAc...) asparagine; by host glycan. A Zn(2+)-binding site is contributed by Asp-239. The interval 260-304 is profusion; the sequence is LKIAGWHGPRAPYTSTLLPPELPETPNATQPELAPEDPEDSALLE. A disordered region spans residues 273–300; it reads TSTLLPPELPETPNATQPELAPEDPEDS. Asn-286 is a glycosylation site (N-linked (GlcNAc...) asparagine; by host). Residues 339–363 traverse the membrane as a helical segment; sequence MGLIAGAVGGSLLAALVICGIVYWM. Residues 364–393 are Intravirion-facing; it reads RRRTRKAPKRIRLPHIREDDQPSSHQPLFY.

It belongs to the herpesviridae glycoprotein D family. Homodimer. Interacts with host receptor TNFRSF14. Interacts with host receptor NECTIN1. Interacts (via profusion domain) with gB; this interaction occurs in the absence of gH/gL. Interacts (via profusion domain) with gH/gL heterodimer; this interaction occurs in the absence of gB. Associates with the gB-gH/gL-gD complex. Interacts (via C-terminus) with UL11 tegument protein. Interacts with host RSAD2.

The protein resides in the virion membrane. The protein localises to the host Golgi apparatus. Its function is as follows. Envelope glycoprotein that binds to the host cell entry receptors NECTIN1, TNFRSF14/HVEM and 3-O-sulfated heparan sulfate, promoting the virus entry into host cells. May trigger fusion with host membrane, by recruiting the fusion machinery composed of gB and gH/gL. The chain is Envelope glycoprotein D (gD) from Homo sapiens (Human).